Reading from the N-terminus, the 280-residue chain is Urease accessory protein UreD (280 aa).

The protein belongs to the UreD family. UreD, UreF and UreG form a complex that acts as a GTP-hydrolysis-dependent molecular chaperone, activating the urease apoprotein by helping to assemble the nickel containing metallocenter of UreC. The UreE protein probably delivers the nickel.

Its subcellular location is the cytoplasm. Functionally, required for maturation of urease via the functional incorporation of the urease nickel metallocenter. The sequence is that of Urease accessory protein UreD from Vibrio parahaemolyticus.